The sequence spans 1577 residues: Disco-interacting protein 2 homolog B-A (1577 aa).

Positions aspartate 7 to phenylalanine 124 constitute a DMAP1-binding domain. 4 disordered regions span residues glutamate 109–arginine 148, valine 173–threonine 204, aspartate 217–serine 239, and serine 253–arginine 273. Positions phenylalanine 124–alanine 140 are enriched in polar residues. Residues serine 176–serine 187 show a composition bias toward low complexity. The segment covering aspartate 217–aspartate 236 has biased composition (polar residues).

It belongs to the DIP2 family.

The protein localises to the cell projection. The protein resides in the dendrite. Its subcellular location is the axon. It localises to the perikaryon. Functionally, negatively regulates axonal outgrowth and is essential for normal synaptic transmission. Not required for regulation of axon polarity. Promotes acetylation of alpha-tubulin. This chain is Disco-interacting protein 2 homolog B-A (dip2ba), found in Danio rerio (Zebrafish).